A 284-amino-acid polypeptide reads, in one-letter code: 2-dehydro-3-deoxyphosphooctonate aldolase (284 aa).

This sequence belongs to the KdsA family.

Its subcellular location is the cytoplasm. It catalyses the reaction D-arabinose 5-phosphate + phosphoenolpyruvate + H2O = 3-deoxy-alpha-D-manno-2-octulosonate-8-phosphate + phosphate. It participates in carbohydrate biosynthesis; 3-deoxy-D-manno-octulosonate biosynthesis; 3-deoxy-D-manno-octulosonate from D-ribulose 5-phosphate: step 2/3. It functions in the pathway bacterial outer membrane biogenesis; lipopolysaccharide biosynthesis. The polypeptide is 2-dehydro-3-deoxyphosphooctonate aldolase (Pseudoalteromonas translucida (strain TAC 125)).